The chain runs to 272 residues: Phosphonates import ATP-binding protein PhnC (272 aa).

The ABC transporter domain maps to 2–246 (LELQRLTKTY…VLATIYGAED (245 aa)). 35 to 42 (GPSGAGKS) contacts ATP. Residues 248–272 (ASSGREPAPEREPEDTERHLAEVGR) form a disordered region. Basic and acidic residues predominate over residues 254–272 (PAPEREPEDTERHLAEVGR).

It belongs to the ABC transporter superfamily. Phosphonates importer (TC 3.A.1.9.1) family. The complex is composed of two ATP-binding proteins (PhnC), two transmembrane proteins (PhnE) and a solute-binding protein (PhnD).

It is found in the cell inner membrane. It catalyses the reaction phosphonate(out) + ATP + H2O = phosphonate(in) + ADP + phosphate + H(+). Its function is as follows. Part of the ABC transporter complex PhnCDE involved in phosphonates import. Responsible for energy coupling to the transport system. This Chromohalobacter salexigens (strain ATCC BAA-138 / DSM 3043 / CIP 106854 / NCIMB 13768 / 1H11) protein is Phosphonates import ATP-binding protein PhnC.